Here is a 296-residue protein sequence, read N- to C-terminus: MELPGALQLGELAAAFASVPVFPLFDAAYFIVSVLYLKYEPGAVEMSRKSPFASWLCAMLHCFGSYILADLLLGESPIHYFSNNSSVILATAVWYLIFFCPMNLFYKCVSFLPVKLIFVAMKEVVRVRKIAAGVHHAHHQYHHGWFIMMATGWVKGSGVALMSNFEQLLRGVWRPETNEILHMSFPTKASLYGTVLFTLQQTHWLPVSEANLVFFFTMFMIVCKVFMTATHSHASPFAPVEGFICPVFFGSVSSGHTSHHNQHGHSHEASYQPPPPVKSKEELNEGTRKRKAKKAE.

Over 1–19 (MELPGALQLGELAAAFASV) the chain is Lumenal. A helical membrane pass occupies residues 20-37 (PVFPLFDAAYFIVSVLYL). The Cytoplasmic portion of the chain corresponds to 38-51 (KYEPGAVEMSRKSP). A helical transmembrane segment spans residues 52–73 (FASWLCAMLHCFGSYILADLLL). Residue Gly-74 participates in Ca(2+) binding. Topologically, residues 74–85 (GESPIHYFSNNS) are lumenal. The helical transmembrane segment at 86–103 (SVILATAVWYLIFFCPMN) threads the bilayer. Topologically, residues 104-107 (LFYK) are cytoplasmic. The helical transmembrane segment at 108 to 126 (CVSFLPVKLIFVAMKEVVR) threads the bilayer. A 1,2-diacyl-sn-glycero-3-phospho-(1D-myo-inositol-4,5-bisphosphate) contacts are provided by Lys-122 and Arg-126. At 127–144 (VRKIAAGVHHAHHQYHHG) the chain is on the lumenal side. The chain crosses the membrane as a helical span at residues 145–162 (WFIMMATGWVKGSGVALM). The Cytoplasmic segment spans residues 163–183 (SNFEQLLRGVWRPETNEILHM). Residues 184 to 201 (SFPTKASLYGTVLFTLQQ) traverse the membrane as a helical segment. The Lumenal portion of the chain corresponds to 202-209 (THWLPVSE). A helical transmembrane segment spans residues 210–230 (ANLVFFFTMFMIVCKVFMTAT). At 231–273 (HSHASPFAPVEGFICPVFFGSVSSGHTSHHNQHGHSHEASYQP) the chain is on the cytoplasmic side. The interval 256–296 (HTSHHNQHGHSHEASYQPPPPVKSKEELNEGTRKRKAKKAE) is disordered. Basic and acidic residues predominate over residues 278-287 (KSKEELNEGT).

The protein belongs to the TMEM38 family. As to quaternary structure, homotrimer; conformation seems to be controled by binding to diacylglycerol (DAG).

It localises to the sarcoplasmic reticulum membrane. The protein resides in the nucleus membrane. It catalyses the reaction K(+)(in) = K(+)(out). With respect to regulation, channel activity is activated by a change of voltage within the sarcoplasmic reticulum lumen and blocked by luminal high Ca(2+) levels. Functionally, intracellular monovalent cation channel required for maintenance of rapid intracellular calcium release. Acts as a potassium counter-ion channel that functions in synchronization with calcium release from intracellular stores. Opened by a change of voltage within the sarcoplasmic reticulum lumen. The sequence is that of Trimeric intracellular cation channel type A (TMEM38A) from Gallus gallus (Chicken).